The following is a 245-amino-acid chain: Spore membrane assembly protein 1 (245 aa).

Its function is as follows. Involved in spore and ascus formation. Required for the efficient assembly of the precursors of the prospore membrane to a continuous prospore membrane. In Saccharomyces cerevisiae (strain ATCC 204508 / S288c) (Baker's yeast), this protein is Spore membrane assembly protein 1 (SMA1).